Consider the following 445-residue polypeptide: ATP synthase subunit b-delta (445 aa).

The interval 1–168 (MSTFIGQLVG…PAAAEVERPV (168 aa)) is ATP synthase subunit b. A helical membrane pass occupies residues 4-24 (FIGQLVGFAAIVFLVWRYVVP). The tract at residues 169-445 (AAKMRSASRR…LTAAEAQLPD (277 aa)) is ATP synthase subunit delta.

It in the N-terminal section; belongs to the ATPase B chain family. This sequence in the C-terminal section; belongs to the ATPase delta chain family. F-type ATPases have 2 components, F(1) - the catalytic core - and F(0) - the membrane proton channel. F(1) has five subunits: alpha(3), beta(3), gamma(1), delta(1), epsilon(1). F(0) has three main subunits: a(1), b(2) and c(10-14). The alpha and beta chains form an alternating ring which encloses part of the gamma chain. F(1) is attached to F(0) by a central stalk formed by the gamma and epsilon chains, while a peripheral stalk is formed by the delta and b chains.

The protein resides in the cell membrane. F(1)F(0) ATP synthase produces ATP from ADP in the presence of a proton or sodium gradient. F-type ATPases consist of two structural domains, F(1) containing the extramembraneous catalytic core and F(0) containing the membrane proton channel, linked together by a central stalk and a peripheral stalk. During catalysis, ATP synthesis in the catalytic domain of F(1) is coupled via a rotary mechanism of the central stalk subunits to proton translocation. In terms of biological role, this fusion protein includes a component of the F(0) channel (subunit b) and of the F(1) subunit (subunit delta). Two copies of subunit b and one of delta together form the peripheral 'stator' stalk which links F(1) to F(0). This is ATP synthase subunit b-delta (atpFH) from Mycobacterium ulcerans (strain Agy99).